The following is a 491-amino-acid chain: MKIMSKLNDQQQFRRDKLKNLVKNGFNFPSSTFEHDNLVEINEKFSQKSKEFFLENQVKIAFAGRLIRQRGPFFIIFSQNLQIQAYISKKFQKKNEFIFANLDLGDIIEVSGYLFKTQTGQLSIKVNNFSLLTKSLHPLPDQYYGIENPDEKYRKRYLDLLVNSESAKTFRLRSKIISLIRTFFDSQGFLEVDTPVLHPVLGGASAKPFITYYNSLSQNFYLRIATELPLKKLLVAGFDRVYEIGKIFRNEGFDSTHNPEFTSIEFYQAYANLEKIMDQTENLFRFLFEKLNLDPANFDFSNKKINFLEKFARYDMIEITSKLMNFDLKSANFADLVEKAKKEGVKIEPFFKKGHLINKFFEKFVEPTLINPTFIIGHPIEISPLAKSNPNNPNFTLRAELFICGKEFANMFDELNDPIDQLSRFQAQIIEKNQGNQEASEIDNEFVQALEYGMPPAGGCGIGIDRLTMLLTKNESIREVILFPQLKPKKD.

2 residues coordinate Mg(2+): E400 and E407.

Belongs to the class-II aminoacyl-tRNA synthetase family. Homodimer. It depends on Mg(2+) as a cofactor.

It is found in the cytoplasm. It carries out the reaction tRNA(Lys) + L-lysine + ATP = L-lysyl-tRNA(Lys) + AMP + diphosphate. The chain is Lysine--tRNA ligase from Mesomycoplasma hyopneumoniae (strain 7448) (Mycoplasma hyopneumoniae).